The primary structure comprises 403 residues: Probable tRNA sulfurtransferase (403 aa).

The THUMP domain occupies 60-165; that stretch reads QLAEERLKPI…KEGVFLSCRT (106 aa). ATP is bound by residues 183 to 184, 208 to 209, arginine 265, glycine 287, and glutamine 296; these read ML and HF.

Belongs to the ThiI family.

It is found in the cytoplasm. The enzyme catalyses [ThiI sulfur-carrier protein]-S-sulfanyl-L-cysteine + a uridine in tRNA + 2 reduced [2Fe-2S]-[ferredoxin] + ATP + H(+) = [ThiI sulfur-carrier protein]-L-cysteine + a 4-thiouridine in tRNA + 2 oxidized [2Fe-2S]-[ferredoxin] + AMP + diphosphate. The catalysed reaction is [ThiS sulfur-carrier protein]-C-terminal Gly-Gly-AMP + S-sulfanyl-L-cysteinyl-[cysteine desulfurase] + AH2 = [ThiS sulfur-carrier protein]-C-terminal-Gly-aminoethanethioate + L-cysteinyl-[cysteine desulfurase] + A + AMP + 2 H(+). The protein operates within cofactor biosynthesis; thiamine diphosphate biosynthesis. Functionally, catalyzes the ATP-dependent transfer of a sulfur to tRNA to produce 4-thiouridine in position 8 of tRNAs, which functions as a near-UV photosensor. Also catalyzes the transfer of sulfur to the sulfur carrier protein ThiS, forming ThiS-thiocarboxylate. This is a step in the synthesis of thiazole, in the thiamine biosynthesis pathway. The sulfur is donated as persulfide by IscS. The sequence is that of Probable tRNA sulfurtransferase from Listeria innocua serovar 6a (strain ATCC BAA-680 / CLIP 11262).